A 385-amino-acid chain; its full sequence is Exopolygalacturonase rpg15 (385 aa).

Positions 1 to 26 (MVRFISFTSPIAALLLLSFGVKHAST) are cleaved as a signal peptide. 4 N-linked (GlcNAc...) asparagine glycosylation sites follow: Asn143, Asn161, Asn164, and Asn180. 4 PbH1 repeats span residues 165–195 (STNL…DLYH), 196–217 (SSGI…AIKE), 219–241 (VEKV…GSLG), and 249–270 (VKHV…RVKT). Asp210 functions as the Proton donor in the catalytic mechanism. Cys212 and Cys229 are joined by a disulfide. N-linked (GlcNAc...) asparagine glycosylation is present at Asn226. Residue His233 is part of the active site. Residues Asn256, Asn319, and Asn343 are each glycosylated (N-linked (GlcNAc...) asparagine). A disulfide bridge links Cys344 with Cys350. The PbH1 5 repeat unit spans residues 350 to 376 (CSDITFSGIDITKASNTTDNVCVYLEG). N-linked (GlcNAc...) asparagine glycosylation is present at Asn365.

This sequence belongs to the glycosyl hydrolase 28 family. Post-translationally, N-glycosylated.

The protein localises to the secreted. The catalysed reaction is [(1-&gt;4)-alpha-D-galacturonosyl](n) + H2O = alpha-D-galacturonate + [(1-&gt;4)-alpha-D-galacturonosyl](n-1). In terms of biological role, specific in hydrolyzing the terminal glycosidic bond of polygalacturonic acid and oligogalacturonates. The protein is Exopolygalacturonase rpg15 of Rhizopus delemar (strain RA 99-880 / ATCC MYA-4621 / FGSC 9543 / NRRL 43880) (Mucormycosis agent).